Reading from the N-terminus, the 715-residue chain is Tegument protein UL46 (715 aa).

3 disordered regions span residues 432–513 (WSAG…CAAQ), 585–605 (DDARRKATHAASARERHAPYE), and 659–680 (GSALFSPPPRPPPPPPLSPSPV). Over residues 444–455 (GPGGHRAGGGTV) the composition is skewed to gly residues. Composition is skewed to low complexity over residues 456 to 467 (GKRFSGPARQRA) and 475 to 488 (PTLDPRGHPAVPEA). A compositionally biased stretch (pro residues) spans 664–677 (SPPPRPPPPPPLSP).

This sequence belongs to the herpesviridae HHV-1 VP11/12 protein family. In terms of assembly, interacts with VP16. Interacts with host LCK, PIK3R1, SHC1 AND GRB2; these interactions promote the activation of the PI3K/AKT pathway. Interacts with host YWHAB. Interacts with ICP0; this interaction targets UL46 for degradation by the proteasome. Post-translationally, phosphorylated by host LCK. The phosphorylation seems to be lymphocyte-specific.

The protein resides in the virion tegument. It localises to the host cell membrane. Functionally, plays a role in the activation of the host PI3K/AKT pathway to promote cell survival. Interacts with and activates host LCK and thereby recruits downstream partners SHC1, GRB2 and PI3KR1 in order to activate the PI3K pathway by phosphorylating host AKT on its activating residues. This mechanism is inhibited by the viral protein US3 that instead promotes incorporation of UL46 into virions. The sequence is that of Tegument protein UL46 from Human herpesvirus 1 (strain F) (HHV-1).